A 174-amino-acid polypeptide reads, in one-letter code: ATP-dependent protease subunit HslV (174 aa).

T2 is an active-site residue. Na(+) contacts are provided by G157, C160, and T163.

It belongs to the peptidase T1B family. HslV subfamily. In terms of assembly, a double ring-shaped homohexamer of HslV is capped on each side by a ring-shaped HslU homohexamer. The assembly of the HslU/HslV complex is dependent on binding of ATP.

Its subcellular location is the cytoplasm. The enzyme catalyses ATP-dependent cleavage of peptide bonds with broad specificity.. With respect to regulation, allosterically activated by HslU binding. Its function is as follows. Protease subunit of a proteasome-like degradation complex believed to be a general protein degrading machinery. The protein is ATP-dependent protease subunit HslV of Yersinia enterocolitica serotype O:8 / biotype 1B (strain NCTC 13174 / 8081).